The chain runs to 134 residues: MKLKGRGIVKGVAEGELVVSRKPLSFLGGVDPNTGIITDPESDIQGEKITGKILAFPRGKGSTVGSYVIYALAKKGTGPKAIIVEEAEAIVAVGAIIAGIPLVTGIDISKLKSGMKVRVDGERGEVEIIAQGDL.

The Proton acceptor role is filled by S62.

Belongs to the AcnX type II small subunit family. Heterodimer composed of a large subunit (PMDh-L) and a small subunit (PMDh-S).

It carries out the reaction (R)-5-phosphomevalonate = (2E)-3-methyl-5-phosphooxypent-2-enoate + H2O. It participates in isoprenoid biosynthesis; isopentenyl diphosphate biosynthesis via mevalonate pathway. In terms of biological role, component of a hydro-lyase that catalyzes the dehydration of mevalonate 5-phosphate (MVA5P) to form trans-anhydromevalonate 5-phosphate (tAHMP). Involved in the archaeal mevalonate (MVA) pathway, which provides fundamental precursors for isoprenoid biosynthesis, such as isopentenyl diphosphate (IPP) and dimethylallyl diphosphate (DMAPP). The chain is Phosphomevalonate dehydratase small subunit from Pyrococcus furiosus (strain ATCC 43587 / DSM 3638 / JCM 8422 / Vc1).